Here is a 407-residue protein sequence, read N- to C-terminus: Aspartokinase (407 aa).

Residue 7–10 participates in ATP binding; it reads KFGG. 25 to 30 contributes to the substrate binding site; that stretch reads RVIEEV. Serine 41 serves as a coordination point for ATP. Residues 47–49, glutamate 74, 125–126, 150–153, and serine 153 each bind substrate; these read TDE, LD, and RGGS. ATP is bound by residues 173-174 and 179-184; these read TD and FTTDPR. ACT domains follow at residues 264–338 and 340–407; these read VTVV…LAKV and IVGS…AVRS. Residues 289 to 291, glutamine 295, 351 to 352, 365 to 366, and 372 to 373 each bind substrate; these read NVD, VA, EI, and SE.

This sequence belongs to the aspartokinase family. As to quaternary structure, tetramer consisting of 2 isoforms Alpha (catalytic and regulation) and of a homodimer of 2 isoforms Beta (regulation).

The catalysed reaction is L-aspartate + ATP = 4-phospho-L-aspartate + ADP. It participates in amino-acid biosynthesis; L-lysine biosynthesis via DAP pathway; (S)-tetrahydrodipicolinate from L-aspartate: step 1/4. Its pathway is amino-acid biosynthesis; L-methionine biosynthesis via de novo pathway; L-homoserine from L-aspartate: step 1/3. It functions in the pathway amino-acid biosynthesis; L-threonine biosynthesis; L-threonine from L-aspartate: step 1/5. Lysine-sensitive. Functionally, catalyzes the phosphorylation of the beta-carboxyl group of aspartic acid with ATP to yield 4-phospho-L-aspartate, which is involved in the branched biosynthetic pathway leading to the biosynthesis of amino acids threonine, isoleucine and methionine. This Geobacillus stearothermophilus (Bacillus stearothermophilus) protein is Aspartokinase (lysC).